Reading from the N-terminus, the 2014-residue chain is Fatty acid synthase beta subunit pigK (2014 aa).

The tract at residues 144-515 (LAAVFGGQST…KDGQGVRVII (372 aa)) is acetyltransferase (AT) domain. Catalysis depends on S263, which acts as the For acetyltransferase activity. Residues 570-815 (SRLLDTPPLM…LITEASGVSD (246 aa)) form an enoyl reductase (ER) domain region. Residues 1126 to 1606 (RSGSPWIHAL…LPGDRLLVNV (481 aa)) form a dehydratase (DH) domain region. The region spanning 1514–1627 (PGWPGVSSLE…FNVSAFKQAT (114 aa)) is the MaoC-like domain. The interval 1645–2005 (FFFTGQGSQK…VREVFNITQS (361 aa)) is malonyl/palmitoyl transferase (MT/PT) domain. S1790 (for malonyltransferase activity) is an active-site residue.

This sequence belongs to the fungal fatty acid synthetase subunit beta family. As to quaternary structure, [Alpha(6)beta(6)] hexamers of two multifunctional subunits (alpha and beta).

It carries out the reaction acetyl-CoA + n malonyl-CoA + 2n NADPH + 4n H(+) = a long-chain-acyl-CoA + n CoA + n CO2 + 2n NADP(+).. The catalysed reaction is holo-[ACP] + acetyl-CoA = acetyl-[ACP] + CoA. It catalyses the reaction holo-[ACP] + malonyl-CoA = malonyl-[ACP] + CoA. The enzyme catalyses a (3R)-hydroxyacyl-[ACP] = a (2E)-enoyl-[ACP] + H2O. It carries out the reaction a 2,3-saturated acyl-[ACP] + NAD(+) = a (2E)-enoyl-[ACP] + NADH + H(+). The catalysed reaction is (9Z)-octadecenoyl-[ACP] + H2O = (9Z)-octadecenoate + holo-[ACP] + H(+). It functions in the pathway secondary metabolite biosynthesis. Fatty acid synthase subunit beta; part of the gene cluster that mediates the biosynthesis of azaphilone pigments (MonAzPs), a complex mixture of compounds with a common azaphilone skeleton very widely used as food colorants. PigJ and pigK form the two subunits of a dedicated fungal fatty acid synthase (FAS) that produces the side chain fatty acyl moiety of MonAzPs, a beta-keto fatty acid. The chain length control of the pigJ-pigK FAS is somewhat flexible as MonAzPs features either a beta-ketooctanoic or a beta-ketodecanoic acid moiety. The beta-ketoacyl-ACP probably serves as the substrate for the acetyltransferase pigD that directly transfers the fatty acyl chain to the C-4 alcohol of the pyran ring. The first step of the pathway is performed by the nrPKS pigA that forms the hexaketide precursor from successive condensations of five malonyl-CoA units, with a simple acetyl-CoA starter unit. The role of esterase pigG is not clear, but it may play at most a supplementary role in the formation of the benzaldehyde produced by the pigA nrPKS. This very reactive benzaldehyde is intercepted by the pigC ketoreductase that to provide the first stable enzyme-free MonAzPs intermediate, 6-(4-hydroxy-2-oxopentyl)-3-methyl-2,4-dioxocyclohexane carbaldehyde, also known as M7PKS-1. The FAD-dependent monooxygenase pigN hydroxylates M7PKS-1 at C-4, which triggers the formation of the pyran ring. PigJ, pigK and pigD are involved in the acetylation of the pyran ring. PigJ and pigK form the two subunits of a dedicated fungal FAS that produces the side chain fatty acyl moiety of MonAzPs and pigD transfers the fatty acyl chain to the C-4 alcohol. PigM and pigO are involved in the elimination of the omega-1 alcohol. PigM acts as an O-acetyltransferase that synthesizes the putative O-11 acetyl intermediate whereas pigO eliminates acetic acid to yield an intermediate with a C10(11) double bond. The dehydration of the C-11 alcohol followed by the reduction of the C6(7) double bond by the NAD(P)H-dependent oxidoreductase pigE increases the electrophilicity of the C-5 ketone of the resulting acyl benzopyran. This in turn sets up the C-5 ketone for an intramolecular Knoevenagel aldol condensation with the C-20 enol of the side chain. This condensation affords the characteristic linear tricyclic carbon skeletons of the yellow pigments that serve as the common precursors for the classical yellow pigments monascin and ankaflavin, orange pigments rubopunctatin and monascorubrin, and red pigments ribropunctamine and monascorubramine. The FAD-dependent oxidoreductase pigF is especially invoved in the biosynthesis of orange and red pigments via desaturation of C6(7). This is Fatty acid synthase beta subunit pigK from Monascus ruber (Mold).